The primary structure comprises 237 residues: 1-(5-phosphoribosyl)-5-[(5-phosphoribosylamino)methylideneamino] imidazole-4-carboxamide isomerase (237 aa).

Asp-8 serves as the catalytic Proton acceptor. Residue Asp-129 is the Proton donor of the active site.

This sequence belongs to the HisA/HisF family.

It is found in the cytoplasm. The catalysed reaction is 1-(5-phospho-beta-D-ribosyl)-5-[(5-phospho-beta-D-ribosylamino)methylideneamino]imidazole-4-carboxamide = 5-[(5-phospho-1-deoxy-D-ribulos-1-ylimino)methylamino]-1-(5-phospho-beta-D-ribosyl)imidazole-4-carboxamide. It functions in the pathway amino-acid biosynthesis; L-histidine biosynthesis; L-histidine from 5-phospho-alpha-D-ribose 1-diphosphate: step 4/9. The polypeptide is 1-(5-phosphoribosyl)-5-[(5-phosphoribosylamino)methylideneamino] imidazole-4-carboxamide isomerase (Acetivibrio thermocellus (strain ATCC 27405 / DSM 1237 / JCM 9322 / NBRC 103400 / NCIMB 10682 / NRRL B-4536 / VPI 7372) (Clostridium thermocellum)).